The primary structure comprises 167 residues: Biogenesis of lysosome-related organelles complex 1 subunit 6 (167 aa).

Residues 1 to 11 (MLKSSNINSVL) show a composition bias toward polar residues. The disordered stretch occupies residues 1 to 38 (MLKSSNINSVLNELPNDPARDSTAQSSHNGKPKQDAET). A coiled-coil region spans residues 102 to 160 (ARLNDMMSDVKRYKDKLTKIKKEMQGVYQRTKELKKRAANVAACKQRDYQRKLERLQHE).

It belongs to the BLOC1S6 family. As to quaternary structure, component of the biogenesis of lysosome-related organelles complex-1 (BLOC-1) composed of Blos1, Blos2, Blos3, Blos4, Dysb, Muted, Pldn and Snapin. Interacts with Blos1, Blos4 and Dysb.

It localises to the synapse. The protein resides in the cytoplasm. Its subcellular location is the cytoskeleton. The protein localises to the myofibril. It is found in the sarcomere. It localises to the z line. In terms of biological role, component of the biogenesis of lysosome-related organelles complex-1 (BLOC-1) involved in pigment granule biogenesis and membrane trafficking in synapses. In response to high synaptic activity at neuromuscular junctions, plays a key role in promoting efficient synaptic vesicle recycling and re-formation through early endosomes. This Drosophila melanogaster (Fruit fly) protein is Biogenesis of lysosome-related organelles complex 1 subunit 6.